The following is a 760-amino-acid chain: uncharacterized protein (760 aa).

A signal peptide spans 1 to 20; it reads MKFKLFLGSSFFGVATLLIA. A lipid anchor (N-palmitoyl cysteine) is attached at Cys-21. The S-diacylglycerol cysteine moiety is linked to residue Cys-21. Disordered stretches follow at residues 221 to 243, 272 to 315, and 705 to 741; these read ENAA…LQLK, AKTN…TSDD, and IKAT…NDKA. Over residues 272–284 the composition is skewed to basic and acidic residues; the sequence is AKTNGEKGNEKQE. Positions 300-312 are enriched in polar residues; it reads KNTSQDKTQNTQT. Basic and acidic residues predominate over residues 705–721; the sequence is IKATSKEGEQNQGKKGD.

It belongs to the MG185/MG260 family.

It is found in the cell membrane. This is an uncharacterized protein from Mycoplasma pneumoniae (strain ATCC 29342 / M129 / Subtype 1) (Mycoplasmoides pneumoniae).